A 168-amino-acid polypeptide reads, in one-letter code: Crossover junction endodeoxyribonuclease RuvC (168 aa).

Active-site residues include aspartate 7, glutamate 67, and histidine 139. The Mg(2+) site is built by aspartate 7, glutamate 67, and histidine 139.

The protein belongs to the RuvC family. As to quaternary structure, homodimer which binds Holliday junction (HJ) DNA. The HJ becomes 2-fold symmetrical on binding to RuvC with unstacked arms; it has a different conformation from HJ DNA in complex with RuvA. In the full resolvosome a probable DNA-RuvA(4)-RuvB(12)-RuvC(2) complex forms which resolves the HJ. The cofactor is Mg(2+).

Its subcellular location is the cytoplasm. It catalyses the reaction Endonucleolytic cleavage at a junction such as a reciprocal single-stranded crossover between two homologous DNA duplexes (Holliday junction).. In terms of biological role, the RuvA-RuvB-RuvC complex processes Holliday junction (HJ) DNA during genetic recombination and DNA repair. Endonuclease that resolves HJ intermediates. Cleaves cruciform DNA by making single-stranded nicks across the HJ at symmetrical positions within the homologous arms, yielding a 5'-phosphate and a 3'-hydroxyl group; requires a central core of homology in the junction. The consensus cleavage sequence is 5'-(A/T)TT(C/G)-3'. Cleavage occurs on the 3'-side of the TT dinucleotide at the point of strand exchange. HJ branch migration catalyzed by RuvA-RuvB allows RuvC to scan DNA until it finds its consensus sequence, where it cleaves and resolves the cruciform DNA. The polypeptide is Crossover junction endodeoxyribonuclease RuvC (Deinococcus geothermalis (strain DSM 11300 / CIP 105573 / AG-3a)).